We begin with the raw amino-acid sequence, 341 residues long: 4-hydroxy-2-oxovalerate aldolase (341 aa).

In terms of domain architecture, Pyruvate carboxyltransferase spans 9-259; that stretch reads VRITEVCLRD…KLDIDLYKMM (251 aa). 17 to 18 serves as a coordination point for substrate; it reads RD. Asp18 contributes to the Mn(2+) binding site. His21 serves as the catalytic Proton acceptor. Residues Ser171 and His198 each contribute to the substrate site. Residues His198 and His200 each contribute to the Mn(2+) site. Tyr289 is a substrate binding site.

The protein belongs to the 4-hydroxy-2-oxovalerate aldolase family.

The enzyme catalyses (S)-4-hydroxy-2-oxopentanoate = acetaldehyde + pyruvate. This Bacillus cereus (strain ATCC 10987 / NRS 248) protein is 4-hydroxy-2-oxovalerate aldolase.